The following is a 452-amino-acid chain: Nebulette (452 aa).

A disordered region spans residues 1-26 (MKVPVSGDVKEETEEENVEQEENQEA). Over residues 11–23 (EETEEENVEQEEN) the composition is skewed to acidic residues. Nebulin repeat units lie at residues 29–63 (SLKP…KSKD), 64–98 (KCTF…ADLS), 101–135 (LYKD…AEKG), 138–172 (DYTH…GTHT), 173–199 (YTAE…EYKK), 206–240 (KEPS…NEMK), 263–278 (LASD…ENKG), 279–313 (LYHF…KNKG), 315–349 (SMLE…KEIK), 352–386 (SSLD…NEIK), 389–423 (GMEL…TEIK), and 426–452 (GMQV…VRMV).

In terms of assembly, interacts (via nebulin repeats 1-5) with DESM (via rod region). Interacts (via SH3 domain) with XIRP2.

It localises to the cytoplasm. In terms of biological role, binds to actin and plays an important role in the assembly of the Z-disk. May functionally link sarcomeric actin to the desmin intermediate filaments in the heart muscle sarcomeres. Isoform 2 might play a role in the assembly of focal adhesion. In Mus musculus (Mouse), this protein is Nebulette (Nebl).